The sequence spans 122 residues: MVDNNYAVRLASRNGYIEVVKYLVSIGADIKADDDYAVKWASRYGHLRVVKFLVSQGADIRVNNDYAVQLASENGHFDVVKYLVSQDANIRADDDYAVKLASVNGHVEVVKYLVSQGAVLNQ.

ANK repeat units follow at residues 3 to 32 (DNNY…DIKA), 33 to 62 (DDDY…DIRV), 63 to 92 (NNDY…NIRA), and 94 to 122 (DDYA…VLNQ).

This chain is Putative ankyrin repeat protein L22, found in Acanthamoeba polyphaga (Amoeba).